We begin with the raw amino-acid sequence, 324 residues long: Beta-ketoacyl-[acyl-carrier-protein] synthase III (324 aa).

Active-site residues include C112 and H250. The interval 251–255 is ACP-binding; that stretch reads QANIR. Residue N280 is part of the active site.

Belongs to the thiolase-like superfamily. FabH family. In terms of assembly, homodimer.

It localises to the cytoplasm. It carries out the reaction malonyl-[ACP] + acetyl-CoA + H(+) = 3-oxobutanoyl-[ACP] + CO2 + CoA. Its pathway is lipid metabolism; fatty acid biosynthesis. Catalyzes the condensation reaction of fatty acid synthesis by the addition to an acyl acceptor of two carbons from malonyl-ACP. Catalyzes the first condensation reaction which initiates fatty acid synthesis and may therefore play a role in governing the total rate of fatty acid production. Possesses both acetoacetyl-ACP synthase and acetyl transacylase activities. Its substrate specificity determines the biosynthesis of branched-chain and/or straight-chain of fatty acids. The polypeptide is Beta-ketoacyl-[acyl-carrier-protein] synthase III (Clostridium novyi (strain NT)).